The sequence spans 448 residues: Exodeoxyribonuclease 7 large subunit (448 aa).

Belongs to the XseA family. As to quaternary structure, heterooligomer composed of large and small subunits.

The protein localises to the cytoplasm. The catalysed reaction is Exonucleolytic cleavage in either 5'- to 3'- or 3'- to 5'-direction to yield nucleoside 5'-phosphates.. In terms of biological role, bidirectionally degrades single-stranded DNA into large acid-insoluble oligonucleotides, which are then degraded further into small acid-soluble oligonucleotides. This chain is Exodeoxyribonuclease 7 large subunit, found in Shewanella sp. (strain MR-7).